The sequence spans 435 residues: GTPase Der (435 aa).

EngA-type G domains follow at residues 8-169 (NLVA…NFEN) and 176-351 (FKIA…NNLS). GTP contacts are provided by residues 14–21 (GKPNVGKS), 61–65 (DTGGI), 123–126 (NKLD), 182–189 (GKPNAGKS), 229–233 (DTAGI), and 294–297 (NKWD). Residues 352–435 (REIKQNLLND…PINLVLKKNK (84 aa)) form the KH-like domain.

The protein belongs to the TRAFAC class TrmE-Era-EngA-EngB-Septin-like GTPase superfamily. EngA (Der) GTPase family. Associates with the 50S ribosomal subunit.

In terms of biological role, GTPase that plays an essential role in the late steps of ribosome biogenesis. This Mycoplasmopsis pulmonis (strain UAB CTIP) (Mycoplasma pulmonis) protein is GTPase Der.